A 651-amino-acid polypeptide reads, in one-letter code: DNA ligase (651 aa).

Residues 30 to 34, 79 to 80, and glutamate 105 each bind NAD(+); these read DEEYD and SM. Lysine 107 acts as the N6-AMP-lysine intermediate in catalysis. NAD(+) contacts are provided by arginine 128, glutamate 162, and lysine 301. Cysteine 395, cysteine 398, cysteine 411, and cysteine 416 together coordinate Zn(2+). In terms of domain architecture, BRCT spans 570–651; that stretch reads ALNENISNKT…NALLGGDDEV (82 aa).

Belongs to the NAD-dependent DNA ligase family. LigA subfamily. The cofactor is Mg(2+). Mn(2+) is required as a cofactor.

It catalyses the reaction NAD(+) + (deoxyribonucleotide)n-3'-hydroxyl + 5'-phospho-(deoxyribonucleotide)m = (deoxyribonucleotide)n+m + AMP + beta-nicotinamide D-nucleotide.. Functionally, DNA ligase that catalyzes the formation of phosphodiester linkages between 5'-phosphoryl and 3'-hydroxyl groups in double-stranded DNA using NAD as a coenzyme and as the energy source for the reaction. It is essential for DNA replication and repair of damaged DNA. This is DNA ligase from Campylobacter lari (strain RM2100 / D67 / ATCC BAA-1060).